A 383-amino-acid chain; its full sequence is Dimethylsulfoniopropionate lyase 6 (383 aa).

This sequence belongs to the aspartate/glutamate racemases family. ALMA1 subfamily. Homotetramer.

The catalysed reaction is S,S-dimethyl-beta-propiothetin = acrylate + dimethyl sulfide + H(+). In terms of biological role, mediates cleavage of dimethylsulfoniopropionate (DMSP) into dimethyl sulfide (DMS) and acrylate. DMS is the principal form by which sulfur is transported from oceans to the atmosphere and is a key component of the ocean sulfur cycle. This chain is Dimethylsulfoniopropionate lyase 6, found in Emiliania huxleyi (strain CCMP1516).